The primary structure comprises 206 residues: Shieldin complex subunit 1 (206 aa).

Residues 27–94 are disordered; sequence SSYEASQRVS…GQLETNEEED (68 aa). The segment covering 32–55 has biased composition (low complexity); the sequence is SQRVSQGSSNSLSSLESHPFLSSS. Residues 56-74 are compositionally biased toward polar residues; sequence TTDPDSNSLNTEQKGSWDS.

As to quaternary structure, component of the shieldin complex, consisting of SHLD1, SHLD2, SHLD3 and MAD2L2/REV7. Within the complex, SHLD2 forms a scaffold which interacts with a SHLD3-MAD2L2 subcomplex via its N-terminus, and with SHLD1 via its C-terminus. Interacts with ASTE1.

The protein localises to the chromosome. In terms of biological role, component of the shieldin complex, which plays an important role in repair of DNA double-stranded breaks (DSBs). During G1 and S phase of the cell cycle, the complex functions downstream of TP53BP1 to promote non-homologous end joining (NHEJ) and suppress DNA end resection. Mediates various NHEJ-dependent processes including immunoglobulin class-switch recombination, and fusion of unprotected telomeres. The sequence is that of Shieldin complex subunit 1 from Mus musculus (Mouse).